Consider the following 165-residue polypeptide: Xanthine-guanine phosphoribosyltransferase (165 aa).

5-phospho-alpha-D-ribose 1-diphosphate contacts are provided by residues 41–42 (RG) and 98–106 (DDLTDTGKT). Mg(2+) is bound at residue D99. Guanine contacts are provided by D102 and I145. Positions 102 and 145 each coordinate xanthine. Residues 102 to 106 (DTGKT) and 144 to 145 (WI) each bind GMP.

The protein belongs to the purine/pyrimidine phosphoribosyltransferase family. XGPT subfamily. In terms of assembly, homotetramer. It depends on Mg(2+) as a cofactor.

It is found in the cell inner membrane. The catalysed reaction is GMP + diphosphate = guanine + 5-phospho-alpha-D-ribose 1-diphosphate. It carries out the reaction XMP + diphosphate = xanthine + 5-phospho-alpha-D-ribose 1-diphosphate. It catalyses the reaction IMP + diphosphate = hypoxanthine + 5-phospho-alpha-D-ribose 1-diphosphate. It functions in the pathway purine metabolism; GMP biosynthesis via salvage pathway; GMP from guanine: step 1/1. It participates in purine metabolism; XMP biosynthesis via salvage pathway; XMP from xanthine: step 1/1. Its function is as follows. Purine salvage pathway enzyme that catalyzes the transfer of the ribosyl-5-phosphate group from 5-phospho-alpha-D-ribose 1-diphosphate (PRPP) to the N9 position of the 6-oxopurines guanine and xanthine to form the corresponding ribonucleotides GMP (guanosine 5'-monophosphate) and XMP (xanthosine 5'-monophosphate), with the release of PPi. To a lesser extent, also acts on hypoxanthine. The chain is Xanthine-guanine phosphoribosyltransferase from Agrobacterium fabrum (strain C58 / ATCC 33970) (Agrobacterium tumefaciens (strain C58)).